We begin with the raw amino-acid sequence, 422 residues long: 3-phosphoshikimate 1-carboxyvinyltransferase (422 aa).

K20, S21, and R25 together coordinate 3-phosphoshikimate. K20 is a binding site for phosphoenolpyruvate. Residues G90 and R118 each coordinate phosphoenolpyruvate. The 3-phosphoshikimate site is built by S163, S164, Q165, S191, D306, and K333. A phosphoenolpyruvate-binding site is contributed by Q165. D306 functions as the Proton acceptor in the catalytic mechanism. Residues R337 and R378 each coordinate phosphoenolpyruvate.

It belongs to the EPSP synthase family. As to quaternary structure, monomer.

Its subcellular location is the cytoplasm. It carries out the reaction 3-phosphoshikimate + phosphoenolpyruvate = 5-O-(1-carboxyvinyl)-3-phosphoshikimate + phosphate. Its pathway is metabolic intermediate biosynthesis; chorismate biosynthesis. Its function is as follows. Catalyzes the transfer of the enolpyruvyl moiety of phosphoenolpyruvate (PEP) to the 5-hydroxyl of shikimate-3-phosphate (S3P) to produce enolpyruvyl shikimate-3-phosphate and inorganic phosphate. The chain is 3-phosphoshikimate 1-carboxyvinyltransferase from Methanocella arvoryzae (strain DSM 22066 / NBRC 105507 / MRE50).